The chain runs to 200 residues: Phospholipase A2 inhibitor 1 (200 aa).

Residues 1–19 (MKSLHIICLLFIFVARGNS) form the signal peptide. Disulfide bonds link Cys-22-Cys-46, Cys-25-Cys-32, Cys-39-Cys-67, Cys-73-Cys-94, Cys-95-Cys-100, Cys-118-Cys-143, Cys-136-Cys-165, and Cys-169-Cys-191. The N-linked (GlcNAc...) asparagine glycan is linked to Asn-176.

It belongs to the CNF-like-inhibitor family. In terms of assembly, occurs as a mixture of oligomers. Tetrameric arrangement appears to be the predominant quaternary structure. In terms of processing, N-glycosylated. Expressed by the liver.

The protein resides in the secreted. Its function is as follows. Inhibits basic phospholipase A2 isozymes PLA-B, BP-I and BP-II. This is Phospholipase A2 inhibitor 1 from Protobothrops flavoviridis (Habu).